Reading from the N-terminus, the 276-residue chain is Undecaprenyl-diphosphatase (276 aa).

The next 6 helical transmembrane spans lie at 43-63, 85-105, 109-129, 183-203, 218-238, and 254-274; these read RAMA…VWEF, LNLL…ADTI, LFNA…MLWA, AATE…AVYS, VFAI…RGLL, and IAFG…WASA.

It belongs to the UppP family.

The protein localises to the cell inner membrane. It catalyses the reaction di-trans,octa-cis-undecaprenyl diphosphate + H2O = di-trans,octa-cis-undecaprenyl phosphate + phosphate + H(+). In terms of biological role, catalyzes the dephosphorylation of undecaprenyl diphosphate (UPP). Confers resistance to bacitracin. The polypeptide is Undecaprenyl-diphosphatase (Pseudomonas syringae pv. syringae (strain B728a)).